The primary structure comprises 383 residues: Chromatin structure-remodeling complex subunit SFH1 (383 aa).

A disordered region spans residues 61–80 (DDDEKVHSDNGKGEGEEVGH). The segment covering 64–80 (EKVHSDNGKGEGEEVGH) has biased composition (basic and acidic residues).

Belongs to the SNF5 family.

Its subcellular location is the nucleus. Its function is as follows. Part of the chromatin structure-remodeling complex (RSC) which is involved in transcription regulation and nucleosome positioning. RSC is responsible for the transfer of a histone octamer from a nucleosome core particle to naked DNA. The reaction requires ATP and involves an activated RSC-nucleosome intermediate. Remodeling reaction also involves DNA translocation, DNA twist and conformational change. As a reconfigurer of centromeric and flanking nucleosomes, RSC complex is required both for proper kinetochore function in chromosome segregation and, via a PKC1-dependent signaling pathway, for organization of the cellular cytoskeleton. This subunit is essential for mitotic growth and required for cell cycle progression. The protein is Chromatin structure-remodeling complex subunit SFH1 (SFH1) of Eremothecium gossypii (strain ATCC 10895 / CBS 109.51 / FGSC 9923 / NRRL Y-1056) (Yeast).